The following is a 686-amino-acid chain: Methionine--tRNA ligase (686 aa).

The 'HIGH' region signature appears at 15–25; the sequence is PYANGPIHLGH. Positions 146, 149, 159, and 162 each coordinate Zn(2+). The 'KMSKS' region signature appears at 332-336; it reads KMSKS. Residue lysine 335 coordinates ATP. A tRNA-binding domain is found at 585 to 686; sequence TFAKTDLRVA…DGAKPGQRIM (102 aa).

The protein belongs to the class-I aminoacyl-tRNA synthetase family. MetG type 1 subfamily. Homodimer. It depends on Zn(2+) as a cofactor.

It localises to the cytoplasm. It catalyses the reaction tRNA(Met) + L-methionine + ATP = L-methionyl-tRNA(Met) + AMP + diphosphate. Functionally, is required not only for elongation of protein synthesis but also for the initiation of all mRNA translation through initiator tRNA(fMet) aminoacylation. This Psychromonas ingrahamii (strain DSM 17664 / CCUG 51855 / 37) protein is Methionine--tRNA ligase.